The primary structure comprises 379 residues: Homoserine O-acetyltransferase (379 aa).

Residues 1 to 24 (MSHDTTPPLPATGAWREGDPPGDR) are disordered. The AB hydrolase-1 domain occupies 60–365 (NAVLVLHALT…ASGHDGFLTE (306 aa)). Ser165 acts as the Nucleophile in catalysis. Arg236 is a binding site for substrate. Active-site residues include Asp329 and His359. Asp360 provides a ligand contact to substrate.

It belongs to the AB hydrolase superfamily. MetX family. In terms of assembly, homodimer.

Its subcellular location is the cytoplasm. It carries out the reaction L-homoserine + acetyl-CoA = O-acetyl-L-homoserine + CoA. The protein operates within amino-acid biosynthesis; L-methionine biosynthesis via de novo pathway; O-acetyl-L-homoserine from L-homoserine: step 1/1. In terms of biological role, transfers an acetyl group from acetyl-CoA to L-homoserine, forming acetyl-L-homoserine. The chain is Homoserine O-acetyltransferase from Thermobifida fusca (strain YX).